A 450-amino-acid polypeptide reads, in one-letter code: ATP-dependent protease ATPase subunit HslU (450 aa).

Residues Val27, 69-74 (GVGKTE), Asp263, Glu328, and Arg400 each bind ATP.

The protein belongs to the ClpX chaperone family. HslU subfamily. A double ring-shaped homohexamer of HslV is capped on each side by a ring-shaped HslU homohexamer. The assembly of the HslU/HslV complex is dependent on binding of ATP.

The protein localises to the cytoplasm. Functionally, ATPase subunit of a proteasome-like degradation complex; this subunit has chaperone activity. The binding of ATP and its subsequent hydrolysis by HslU are essential for unfolding of protein substrates subsequently hydrolyzed by HslV. HslU recognizes the N-terminal part of its protein substrates and unfolds these before they are guided to HslV for hydrolysis. This is ATP-dependent protease ATPase subunit HslU from Aquifex aeolicus (strain VF5).